Here is a 268-residue protein sequence, read N- to C-terminus: Probable membrane transporter protein HI_0806 (268 aa).

Transmembrane regions (helical) follow at residues 6–26 (IFIL…FGIG), 46–66 (VISA…LLFF), 79–99 (ILWS…SFYF), 101–121 (TAII…KTFL), 147–167 (GGGL…APLV), 178–198 (IAVY…YGYL), 212–232 (LGLN…MSFF), and 248–268 (LLAI…FVFH).

This sequence belongs to the 4-toluene sulfonate uptake permease (TSUP) (TC 2.A.102) family.

It localises to the cell membrane. In Haemophilus influenzae (strain ATCC 51907 / DSM 11121 / KW20 / Rd), this protein is Probable membrane transporter protein HI_0806.